A 108-amino-acid chain; its full sequence is Peptidyl-prolyl cis-trans isomerase FKBP1B (108 aa).

The 89-residue stretch at 20–108 (GQTCVVHYTG…IFDVELLNLE (89 aa)) folds into the PPIase FKBP-type domain.

In terms of assembly, identified in a complex composed of RYR2, FKBP1B, PKA catalytic subunit, PRKAR2A, AKAP6, and the protein phosphatases PP2A and PP1. Interacts directly with RYR2.

It localises to the cytoplasm. The protein resides in the sarcoplasmic reticulum. The catalysed reaction is [protein]-peptidylproline (omega=180) = [protein]-peptidylproline (omega=0). Inhibited by both FK506 and rapamycin. Has the potential to contribute to the immunosuppressive and toxic effects of FK506 and rapamycin. PPIases accelerate the folding of proteins. It catalyzes the cis-trans isomerization of proline imidic peptide bonds in oligopeptides. The protein is Peptidyl-prolyl cis-trans isomerase FKBP1B (FKBP1B) of Bos taurus (Bovine).